The chain runs to 380 residues: Crotonobetainyl-CoA reductase (380 aa).

It belongs to the acyl-CoA dehydrogenase family. Homotetramer. FAD serves as cofactor.

It localises to the cytoplasm. The catalysed reaction is 4-(trimethylamino)butanoyl-CoA + oxidized [electron-transfer flavoprotein] + H(+) = crotonobetainyl-CoA + reduced [electron-transfer flavoprotein]. The protein operates within amine and polyamine metabolism; carnitine metabolism. Its function is as follows. Catalyzes the reduction of crotonobetainyl-CoA to gamma-butyrobetainyl-CoA. This chain is Crotonobetainyl-CoA reductase, found in Citrobacter koseri (strain ATCC BAA-895 / CDC 4225-83 / SGSC4696).